We begin with the raw amino-acid sequence, 144 residues long: MRLNTLSPAEGSKHASKRPGRGIGSGLGKTGGRGHKGQKSRSGGGVRRGFEGGQMPLYRRLPKFGFTSRKSMVTAEIRLSDLAHVEGDVVDLNTLKAANIVGIQTEFAKIMLSGEVKRAVTIRGLRVSKGARAAIEAAGGKIEE.

A disordered region spans residues 1–53 (MRLNTLSPAEGSKHASKRPGRGIGSGLGKTGGRGHKGQKSRSGGGVRRGFEGG). Positions 21 to 31 (RGIGSGLGKTG) are enriched in gly residues.

It belongs to the universal ribosomal protein uL15 family. As to quaternary structure, part of the 50S ribosomal subunit.

In terms of biological role, binds to the 23S rRNA. The protein is Large ribosomal subunit protein uL15 of Sodalis glossinidius (strain morsitans).